The sequence spans 103 residues: Large ribosomal subunit protein bL21 (103 aa).

Belongs to the bacterial ribosomal protein bL21 family. As to quaternary structure, part of the 50S ribosomal subunit. Contacts protein L20.

Functionally, this protein binds to 23S rRNA in the presence of protein L20. The protein is Large ribosomal subunit protein bL21 of Vesicomyosocius okutanii subsp. Calyptogena okutanii (strain HA).